We begin with the raw amino-acid sequence, 663 residues long: Rap1 GTPase-activating protein 1 (663 aa).

One can recognise a GoLoco domain in the interval 1–17; sequence MIEKMQGSRMDEQRCSF. The tract at residues 1-23 is disordered; that stretch reads MIEKMQGSRMDEQRCSFPPPLKT. Phosphoserine is present on F17. The Rap-GAP domain maps to 181 to 397; sequence IVTFDEHVIS…RTRAALLETL (217 aa). S441 carries the post-translational modification Phosphoserine. Disordered regions lie at residues 442–604 and 616–645; these read MDAM…PHKR and SVST…PACP. Residues 450–465 show a composition bias toward polar residues; sequence KKPNTVSTSHSGSFAP. Residues S484, S499, S515, S541, and S542 each carry the phosphoserine modification. Polar residues predominate over residues 535 to 549; that stretch reads ENSSTQSSPEMPTTK. Residues 567-579 are compositionally biased toward low complexity; the sequence is RSSSSASSFASVV. A compositionally biased stretch (acidic residues) spans 580 to 591; that stretch reads EETEGVDGEDTG. Low complexity predominate over residues 616-630; that stretch reads SVSTTSGGSSPGPSR.

As to quaternary structure, homodimer and heterodimer with RAP1B. As to expression, significant expression seen in the brain, kidney and pancreas. Abundant in the cerebral cortex and expressed at much lower levels in the spinal cord. Not detected in the lymphoid tissues.

The protein localises to the golgi apparatus membrane. Functionally, GTPase activator for the nuclear Ras-related regulatory protein RAP-1A (KREV-1), converting it to the putatively inactive GDP-bound state. This Homo sapiens (Human) protein is Rap1 GTPase-activating protein 1 (RAP1GAP).